Here is a 757-residue protein sequence, read N- to C-terminus: MTILNHTLGFPRVGLQRELKKAQESYWAGNSTQEELLTVGRELRARHWQQQKDAGVNLLPVGDFAWYDHVLTTSLMLGNVPARHQNKDGSVDLDTLFRLGRGRAPSGEPAAAAEMTKWFNTNYHYMVPEFVQGQQFKLTWTQLLDEVDEALALGHKVKPVLLGPVTYLWLGKVKGDPFDRLNLLQDILPVYRQVLAELAKRDIEWVQIDEPALALELPAEWLAAFKPAYDALQGQTKLLLTTYFDSIGQNLDTISALPVQGLHVDLVHGKDAITLLNSKVPADWLLSVGVINGRNVWRADLSSWFERLQPLVARRKRLWIGSSCSLLHSPIDLSVETRLDEEVKSWFAFALQKCSELALLSSALNNNDPASLEAWSAPIRSRKHSTRVHNAAVGQRLAAISPQDSLRKNRYPVRAKAQRQRFQLPAWPTTTIGSFPQTTEIRGLRLDFKQGRLDGTHYRTGIAEHIKQAIVEQERLGLDVLVHGEAERNDMVEYFGEHLDGFIFTQNGWVQSYGSRCVKPPVIIGDVSRPEAITVNWAKYAQSLTDKPVKGMLTGPVTILCWSFPREDVSRETIAKQIALALRDEVEDLEKAGIGIIQIDEPALREGLPLHQSDWGAYLEWAVDAFRLNAAVAQDDTQIHTHMCYCEFNDIMDSIAALDADVITIETSRSDMELLESFEEFEYPNEIGPGVYDIHSPNVPSVEWVEALLLKAAQRIPTERLWVNPDCGLKTRGWTETRQALANMVKAAQNLRQAQKA.

Residues 17–20 and K117 contribute to the 5-methyltetrahydropteroyltri-L-glutamate site; that span reads RELK. L-homocysteine contacts are provided by residues 432–434 and E485; that span reads IGS. L-methionine is bound by residues 432–434 and E485; that span reads IGS. Residues 516–517 and W562 contribute to the 5-methyltetrahydropteroyltri-L-glutamate site; that span reads RC. D600 contacts L-homocysteine. D600 is an L-methionine binding site. E606 contacts 5-methyltetrahydropteroyltri-L-glutamate. H642, C644, and E666 together coordinate Zn(2+). Catalysis depends on H695, which acts as the Proton donor. Residue C727 coordinates Zn(2+).

This sequence belongs to the vitamin-B12 independent methionine synthase family. Zn(2+) is required as a cofactor.

The enzyme catalyses 5-methyltetrahydropteroyltri-L-glutamate + L-homocysteine = tetrahydropteroyltri-L-glutamate + L-methionine. It functions in the pathway amino-acid biosynthesis; L-methionine biosynthesis via de novo pathway; L-methionine from L-homocysteine (MetE route): step 1/1. Its function is as follows. Catalyzes the transfer of a methyl group from 5-methyltetrahydrofolate to homocysteine resulting in methionine formation. The polypeptide is 5-methyltetrahydropteroyltriglutamate--homocysteine methyltransferase (Erwinia tasmaniensis (strain DSM 17950 / CFBP 7177 / CIP 109463 / NCPPB 4357 / Et1/99)).